The chain runs to 184 residues: Large ribosomal subunit protein uL6 (184 aa).

The protein belongs to the universal ribosomal protein uL6 family. In terms of assembly, part of the 50S ribosomal subunit.

This protein binds to the 23S rRNA, and is important in its secondary structure. It is located near the subunit interface in the base of the L7/L12 stalk, and near the tRNA binding site of the peptidyltransferase center. This Thermosipho melanesiensis (strain DSM 12029 / CIP 104789 / BI429) protein is Large ribosomal subunit protein uL6.